The primary structure comprises 434 residues: Enolase (434 aa).

Alanine 41 serves as a coordination point for phosphoenolpyruvate. Glutamine 165 is a (2R)-2-phosphoglycerate binding site. Catalysis depends on glutamate 207, which acts as the Proton donor. The Mg(2+) site is built by aspartate 244, glutamate 291, and aspartate 318. Phosphoenolpyruvate contacts are provided by lysine 343, arginine 372, serine 373, and lysine 394. Residues lysine 343, arginine 372, serine 373, and lysine 394 each coordinate (2R)-2-phosphoglycerate. The active-site Proton acceptor is the lysine 343.

It belongs to the enolase family. In terms of assembly, homodimer and homooctamer; the homodimer is inactive. Requires Mg(2+) as cofactor.

The protein localises to the cytoplasm. It localises to the secreted. Its subcellular location is the cell surface. It catalyses the reaction (2R)-2-phosphoglycerate = phosphoenolpyruvate + H2O. It functions in the pathway carbohydrate degradation; glycolysis; pyruvate from D-glyceraldehyde 3-phosphate: step 4/5. Catalyzes the reversible conversion of 2-phosphoglycerate (2-PG) into phosphoenolpyruvate (PEP). It is essential for the degradation of carbohydrates via glycolysis. Its function is as follows. 'Moonlights' as a laminin receptor. Binds laminin when expressed on the bacterial cell surface; this probably induces destruction of the extracellular matrix, favoring invasion and dissemination. The chain is Enolase from Staphylococcus aureus.